The following is a 108-amino-acid chain: UPF0060 membrane protein CJA_3703 (108 aa).

A run of 4 helical transmembrane segments spans residues 6–26, 31–51, 61–81, and 85–105; these read LLFV…YLWL, SIWL…LLTL, AAYG…VDGV, and AYDW…AMGW.

This sequence belongs to the UPF0060 family.

Its subcellular location is the cell inner membrane. The sequence is that of UPF0060 membrane protein CJA_3703 from Cellvibrio japonicus (strain Ueda107) (Pseudomonas fluorescens subsp. cellulosa).